A 410-amino-acid chain; its full sequence is Peptidase T (410 aa).

Residues 11 to 30 (RYAEIDTQSDPDSESTPSTE) are disordered. H78 is a binding site for Zn(2+). D80 is an active-site residue. D140 serves as a coordination point for Zn(2+). E174 serves as the catalytic Proton acceptor. The Zn(2+) site is built by E175, D197, and H379.

It belongs to the peptidase M20B family. Zn(2+) is required as a cofactor.

It localises to the cytoplasm. It catalyses the reaction Release of the N-terminal residue from a tripeptide.. Its function is as follows. Cleaves the N-terminal amino acid of tripeptides. In Staphylococcus carnosus (strain TM300), this protein is Peptidase T.